The sequence spans 377 residues: Succinyl-diaminopimelate desuccinylase (377 aa).

His-66 is a Zn(2+) binding site. Asp-68 is a catalytic residue. A Zn(2+)-binding site is contributed by Asp-99. Glu-133 acts as the Proton acceptor in catalysis. Residues Glu-134, Glu-162, and His-348 each coordinate Zn(2+).

The protein belongs to the peptidase M20A family. DapE subfamily. As to quaternary structure, homodimer. Zn(2+) is required as a cofactor. Co(2+) serves as cofactor.

It carries out the reaction N-succinyl-(2S,6S)-2,6-diaminopimelate + H2O = (2S,6S)-2,6-diaminopimelate + succinate. It functions in the pathway amino-acid biosynthesis; L-lysine biosynthesis via DAP pathway; LL-2,6-diaminopimelate from (S)-tetrahydrodipicolinate (succinylase route): step 3/3. In terms of biological role, catalyzes the hydrolysis of N-succinyl-L,L-diaminopimelic acid (SDAP), forming succinate and LL-2,6-diaminopimelate (DAP), an intermediate involved in the bacterial biosynthesis of lysine and meso-diaminopimelic acid, an essential component of bacterial cell walls. The sequence is that of Succinyl-diaminopimelate desuccinylase from Chromobacterium violaceum (strain ATCC 12472 / DSM 30191 / JCM 1249 / CCUG 213 / NBRC 12614 / NCIMB 9131 / NCTC 9757 / MK).